Consider the following 251-residue polypeptide: 3-deoxy-manno-octulosonate cytidylyltransferase (251 aa).

It belongs to the KdsB family.

The protein localises to the cytoplasm. It catalyses the reaction 3-deoxy-alpha-D-manno-oct-2-ulosonate + CTP = CMP-3-deoxy-beta-D-manno-octulosonate + diphosphate. It functions in the pathway nucleotide-sugar biosynthesis; CMP-3-deoxy-D-manno-octulosonate biosynthesis; CMP-3-deoxy-D-manno-octulosonate from 3-deoxy-D-manno-octulosonate and CTP: step 1/1. The protein operates within bacterial outer membrane biogenesis; lipopolysaccharide biosynthesis. Activates KDO (a required 8-carbon sugar) for incorporation into bacterial lipopolysaccharide in Gram-negative bacteria. This chain is 3-deoxy-manno-octulosonate cytidylyltransferase, found in Sodalis glossinidius (strain morsitans).